Consider the following 255-residue polypeptide: Acetylglutamate kinase (255 aa).

Substrate-binding positions include 40–41 (GG), arginine 62, and asparagine 153.

This sequence belongs to the acetylglutamate kinase family. ArgB subfamily.

Its subcellular location is the cytoplasm. It carries out the reaction N-acetyl-L-glutamate + ATP = N-acetyl-L-glutamyl 5-phosphate + ADP. Its pathway is amino-acid biosynthesis; L-arginine biosynthesis; N(2)-acetyl-L-ornithine from L-glutamate: step 2/4. In terms of biological role, catalyzes the ATP-dependent phosphorylation of N-acetyl-L-glutamate. The polypeptide is Acetylglutamate kinase (Bacillus cereus (strain ZK / E33L)).